A 416-amino-acid chain; its full sequence is Probable endo-beta-1,4-glucanase celB (416 aa).

The first 17 residues, 1 to 17 (MIWTLAPFVALLPLVTA), serve as a signal peptide directing secretion. N-linked (GlcNAc...) asparagine glycosylation is found at Asn-45, Asn-104, Asn-117, and Asn-135. The Nucleophile role is filled by Glu-214. The active-site Proton donor is Glu-219. N-linked (GlcNAc...) asparagine glycosylation is found at Asn-233, Asn-278, Asn-292, and Asn-382.

Belongs to the glycosyl hydrolase 7 (cellulase C) family.

It localises to the secreted. The catalysed reaction is Endohydrolysis of (1-&gt;4)-beta-D-glucosidic linkages in cellulose, lichenin and cereal beta-D-glucans.. Has endoglucanase activity on substrates containing beta-1,4 glycosidic bonds, like in carboxymethylcellulose (CMC), hydroxyethylcellulose (HEC) and beta-glucan. Involved in the degradation of complex natural cellulosic substrates. The sequence is that of Probable endo-beta-1,4-glucanase celB (celB) from Aspergillus flavus (strain ATCC 200026 / FGSC A1120 / IAM 13836 / NRRL 3357 / JCM 12722 / SRRC 167).